A 241-amino-acid chain; its full sequence is Probable transcriptional regulatory protein stu0195 (241 aa).

This sequence belongs to the TACO1 family. YeeN subfamily.

The protein localises to the cytoplasm. In Streptococcus thermophilus (strain ATCC BAA-250 / LMG 18311), this protein is Probable transcriptional regulatory protein stu0195.